The chain runs to 341 residues: Aromatic amino acid aminotransferase (341 aa).

Lysine 213 is modified (N6-(pyridoxal phosphate)lysine).

The protein belongs to the class-II pyridoxal-phosphate-dependent aminotransferase family. Homodimer. Requires pyridoxal 5'-phosphate as cofactor.

The catalysed reaction is an aromatic L-alpha-amino acid + 2-oxoglutarate = an aromatic oxo-acid + L-glutamate. Functionally, aminotransferase that catalyzes the conversion of aromatic amino acids and 2-oxoglutarate into corresponding aromatic oxo acids and L-glutamate. The chain is Aromatic amino acid aminotransferase from Corynebacterium glutamicum (strain R).